Here is a 323-residue protein sequence, read N- to C-terminus: Chitinase 1 (323 aa).

Positions Met1–Gly20 are cleaved as a signal peptide. One can recognise a Chitin-binding type-1 domain in the interval Glu21 to Gly61. Disulfide bonds link Cys23–Cys38, Cys32–Cys44, Cys35–Cys63, Cys37–Cys51, Cys55–Cys59, Cys100–Cys162, Cys176–Cys184, and Cys283–Cys315. Catalysis depends on Glu144, which acts as the Proton donor.

Belongs to the glycosyl hydrolase 19 family. Chitinase class I subfamily. Expressed in roots, leaves, sheaths and meristems.

The catalysed reaction is Random endo-hydrolysis of N-acetyl-beta-D-glucosaminide (1-&gt;4)-beta-linkages in chitin and chitodextrins.. In terms of biological role, hydrolyzes chitin and may play a role in defense against fungal pathogens containing chitin. The chain is Chitinase 1 (Cht1) from Oryza sativa subsp. japonica (Rice).